The chain runs to 432 residues: Adenylosuccinate synthetase (432 aa).

GTP-binding positions include 12 to 18 and 40 to 42; these read GDEGKGK and GHT. Residue aspartate 13 is the Proton acceptor of the active site. 2 residues coordinate Mg(2+): aspartate 13 and glycine 40. Residues 13–16, 38–41, threonine 132, arginine 146, glutamine 226, threonine 241, and arginine 305 contribute to the IMP site; these read DEGK and NAGH. Residue histidine 41 is the Proton donor of the active site. Residue 301 to 307 participates in substrate binding; that stretch reads TVTGRKR. GTP contacts are provided by residues arginine 307, 333–335, and 415–417; these read KLD and STS.

The protein belongs to the adenylosuccinate synthetase family. As to quaternary structure, homodimer. Requires Mg(2+) as cofactor.

Its subcellular location is the cytoplasm. The catalysed reaction is IMP + L-aspartate + GTP = N(6)-(1,2-dicarboxyethyl)-AMP + GDP + phosphate + 2 H(+). It functions in the pathway purine metabolism; AMP biosynthesis via de novo pathway; AMP from IMP: step 1/2. In terms of biological role, plays an important role in the de novo pathway of purine nucleotide biosynthesis. Catalyzes the first committed step in the biosynthesis of AMP from IMP. This chain is Adenylosuccinate synthetase, found in Rhizobium etli (strain ATCC 51251 / DSM 11541 / JCM 21823 / NBRC 15573 / CFN 42).